The primary structure comprises 306 residues: Brix domain-containing protein C4F8.04 (306 aa).

The segment at 16-49 is disordered; it reads KALHQKNKDKLERRKERAKEEEKDPEKKRLRLSE. Residues 21–42 are compositionally biased toward basic and acidic residues; sequence KNKDKLERRKERAKEEEKDPEK. The 190-residue stretch at 94-283 folds into the Brix domain; the sequence is PKLLVTTSKR…LRMVQKGVWD (190 aa).

This Schizosaccharomyces pombe (strain 972 / ATCC 24843) (Fission yeast) protein is Brix domain-containing protein C4F8.04.